The following is a 263-amino-acid chain: Oxidoreductase UcpA (263 aa).

10 to 32 (LITGALQGIGEGIARTFARHGAN) provides a ligand contact to NAD(+). Ser141 provides a ligand contact to substrate. Tyr155 (proton acceptor) is an active-site residue.

This sequence belongs to the short-chain dehydrogenases/reductases (SDR) family.

In Escherichia coli O157:H7, this protein is Oxidoreductase UcpA (ucpA).